Reading from the N-terminus, the 899-residue chain is Protein translocase subunit SecA (899 aa).

Residues glutamine 87, 105–109 (GEGKT), and aspartate 516 contribute to the ATP site. 4 residues coordinate Zn(2+): cysteine 884, cysteine 886, cysteine 895, and histidine 896.

This sequence belongs to the SecA family. In terms of assembly, monomer and homodimer. Part of the essential Sec protein translocation apparatus which comprises SecA, SecYEG and auxiliary proteins SecDF. Other proteins may also be involved. The cofactor is Zn(2+).

The protein resides in the cell inner membrane. Its subcellular location is the cytoplasm. The enzyme catalyses ATP + H2O + cellular proteinSide 1 = ADP + phosphate + cellular proteinSide 2.. In terms of biological role, part of the Sec protein translocase complex. Interacts with the SecYEG preprotein conducting channel. Has a central role in coupling the hydrolysis of ATP to the transfer of proteins into and across the cell membrane, serving as an ATP-driven molecular motor driving the stepwise translocation of polypeptide chains across the membrane. The chain is Protein translocase subunit SecA from Borrelia garinii subsp. bavariensis (strain ATCC BAA-2496 / DSM 23469 / PBi) (Borreliella bavariensis).